The chain runs to 182 residues: Succinate dehydrogenase [ubiquinone] cytochrome b small subunit, mitochondrial (182 aa).

Over 1 to 71 (MSLSLLLRGA…SAPRMASAGS (71 aa)) the chain is Mitochondrial matrix. A helical membrane pass occupies residues 72–96 (SHTLLWTVERIVSAGLLAVIPAAFI). Over 97 to 101 (APSQV) the chain is Mitochondrial intermembrane. Residues 102–122 (LDALMAISVVIHTHWGVEAMV) form a helical membrane-spanning segment. Residue His-113 coordinates heme. The Mitochondrial matrix portion of the chain corresponds to 123 to 135 (VDYMRPSVVGNVL). Tyr-125 is a binding site for a ubiquinone. Residues 136 to 157 (PKVAHIALIIISVATLGGLFYF) form a helical membrane-spanning segment. Residues 158-182 (IQNDVGLANGIKRFWAIKGKDAEKA) lie on the Mitochondrial intermembrane side of the membrane.

Belongs to the CybS family. As to quaternary structure, forms part of complex II containing four subunits: a flavoprotein (FP), an iron-sulfur protein (IP) and a cytochrome b composed of a large and a small subunit.

Its subcellular location is the mitochondrion inner membrane. Its pathway is carbohydrate metabolism; tricarboxylic acid cycle. In terms of biological role, membrane-anchoring subunit of succinate dehydrogenase (SDH) that is involved in complex II of the mitochondrial electron transport chain and is responsible for transferring electrons from succinate to ubiquinone (coenzyme Q). This chain is Succinate dehydrogenase [ubiquinone] cytochrome b small subunit, mitochondrial, found in Drosophila melanogaster (Fruit fly).